Reading from the N-terminus, the 744-residue chain is Leukocyte immunoglobulin-like receptor subfamily B member 3A (744 aa).

Positions 1–24 are cleaved as a signal peptide; the sequence is MTFTFTALLCLGLTLGLWIPVLTG. The Extracellular segment spans residues 25 to 543; sequence SLPKPILRVQ…PPDGLQRYLK (519 aa). 5 consecutive Ig-like C2-type domains span residues 26 to 119, 121 to 221, 223 to 316, 320 to 419, and 426 to 520; these read LPKP…VVTG, YSKP…LVSG, LQKP…VVTG, YHPL…LITG, and FLSV…IVSG. Cystine bridges form between Cys-49–Cys-98, Cys-144–Cys-197, and Cys-246–Cys-295. N-linked (GlcNAc...) asparagine glycosylation occurs at Asn-79. Residue Asn-338 is glycosylated (N-linked (GlcNAc...) asparagine). Cys-343 and Cys-395 form a disulfide bridge. Asn-440 carries N-linked (GlcNAc...) asparagine glycosylation. The cysteines at positions 445 and 496 are disulfide-linked. Residues 544 to 564 form a helical membrane-spanning segment; the sequence is ALIGVSVAFLLFLFILIFILL. Topologically, residues 565–744 are cytoplasmic; that stretch reads RRRHQEKFRK…PGAVPKNKKQ (180 aa). The segment covering 572 to 584 has biased composition (basic and acidic residues); it reads FRKDDEDAQKGKE. 3 disordered regions span residues 572-617, 630-652, and 667-744; these read FRKD…ESLY, ELDT…VEPS, and EQLN…NKKQ. The ITIM motif 1 signature appears at 615–620; sequence SLYASV. 2 short sequence motifs (ITIM motif) span residues 695–700 and 725–730; these read VTYAQL and SVYAAL. Tyr-697 and Tyr-727 each carry phosphotyrosine; by LYN.

As to quaternary structure, interacts with LYN, PTPN6/SHP-1 and PTPN11/SHP-2. Post-translationally, phosphorylated on tyrosine residues by LYN. Phosphorylation at Tyr-697 and Tyr-727 is important for interaction with PTPN6/SHP-1 and PTPN11/SHP-2.

Its subcellular location is the cell membrane. May act as receptor for class I MHC antigens. Becomes activated upon coligation with immune receptors, such as FCGR2B and the B-cell receptor. Down-regulates antigen-induced B-cell activation by recruiting phosphatases to its immunoreceptor tyrosine-based inhibitor motifs (ITIM). The polypeptide is Leukocyte immunoglobulin-like receptor subfamily B member 3A (Rattus norvegicus (Rat)).